The primary structure comprises 473 residues: RUN domain-containing protein 3B (473 aa).

The tract at residues 1–24 (MASRSLGGLSGIRGGGGGGGKKSL) is disordered. Gly residues predominate over residues 8 to 21 (GLSGIRGGGGGGGK). At Arg-13 the chain carries Omega-N-methylarginine. Residues 57–206 (DDSSPEFNNF…IDFSFCLKGE (150 aa)) form the RUN domain. 2 positions are modified to phosphoserine: Ser-232 and Ser-233. A coiled-coil region spans residues 317-342 (AHKLEKEQLEYIIVELQDQLTVLKNN). Residues 399-422 (SLSQTSLDPGQSQEGDGKQDTLNV) show a composition bias toward polar residues. Positions 399–428 (SLSQTSLDPGQSQEGDGKQDTLNVMSEGKE) are disordered.

Belongs to the RUNDC3 family. Interacts with RAP2A. As to expression, isoform 2 is expressed at high levels in brain, thymus, ovary, testis, leukocyte, liver, small intestine and prostate. Isoform 1 is expressed in the brain, testis and adrenal gland. It is activated in tumorigenic breast cancer cell lines and in the primary tumor of breast cancer patients. Activation also correlates with metastatic lymph node invasion and can be detected in metastatic epithelial cells from the lymph nodes and in the bone marrow of patients.

The protein is RUN domain-containing protein 3B (RUNDC3B) of Homo sapiens (Human).